The following is a 185-amino-acid chain: Phospholipase A2 inhibitor 25 kDa subunit (185 aa).

8 disulfide bridges follow: Cys-3/Cys-27, Cys-6/Cys-13, Cys-20/Cys-48, Cys-54/Cys-75, Cys-76/Cys-81, Cys-101/Cys-126, Cys-119/Cys-146, and Cys-152/Cys-172.

Belongs to the CNF-like-inhibitor family. In terms of assembly, heterodimer with phospholipase A2 inhibitor 31 kDa. Expressed by the liver.

The protein resides in the secreted. Inhibits the enzymatic activity of phospholipase A2. The polypeptide is Phospholipase A2 inhibitor 25 kDa subunit (Naja kaouthia (Monocled cobra)).